The following is a 194-amino-acid chain: ATP-dependent Clp protease proteolytic subunit (194 aa).

The active-site Nucleophile is the Ser-97. Residue His-122 is part of the active site.

The protein belongs to the peptidase S14 family. Fourteen ClpP subunits assemble into 2 heptameric rings which stack back to back to give a disk-like structure with a central cavity, resembling the structure of eukaryotic proteasomes.

The protein localises to the cytoplasm. The enzyme catalyses Hydrolysis of proteins to small peptides in the presence of ATP and magnesium. alpha-casein is the usual test substrate. In the absence of ATP, only oligopeptides shorter than five residues are hydrolyzed (such as succinyl-Leu-Tyr-|-NHMec, and Leu-Tyr-Leu-|-Tyr-Trp, in which cleavage of the -Tyr-|-Leu- and -Tyr-|-Trp bonds also occurs).. In terms of biological role, cleaves peptides in various proteins in a process that requires ATP hydrolysis. Has a chymotrypsin-like activity. Plays a major role in the degradation of misfolded proteins. This is ATP-dependent Clp protease proteolytic subunit from Lactobacillus delbrueckii subsp. bulgaricus (strain ATCC BAA-365 / Lb-18).